The following is a 345-amino-acid chain: Dihydroorotase (345 aa).

Zn(2+) contacts are provided by H13 and H15. Residues 15-17 (HFR) and N41 each bind substrate. Zn(2+) is bound by residues K98, H135, and H173. K98 carries the post-translational modification N6-carboxylysine. Position 135 (H135) interacts with substrate. L218 contacts substrate. D246 is a Zn(2+) binding site. D246 is a catalytic residue. Substrate is bound by residues H250 and A262.

It belongs to the metallo-dependent hydrolases superfamily. DHOase family. Class II DHOase subfamily. Homodimer. The cofactor is Zn(2+).

The enzyme catalyses (S)-dihydroorotate + H2O = N-carbamoyl-L-aspartate + H(+). It functions in the pathway pyrimidine metabolism; UMP biosynthesis via de novo pathway; (S)-dihydroorotate from bicarbonate: step 3/3. Catalyzes the reversible cyclization of carbamoyl aspartate to dihydroorotate. The sequence is that of Dihydroorotase from Shewanella halifaxensis (strain HAW-EB4).